A 157-amino-acid chain; its full sequence is DNA-binding protein MNB1B (157 aa).

3 disordered regions span residues Met-1–Pro-45, Phe-59–Asp-87, and Tyr-109–Glu-157. Basic and acidic residues-rich tracts occupy residues Ala-10 to Ala-27 and Ala-76 to Asp-87. A DNA-binding region (HMG box) is located at residues Pro-41–Asn-110. 2 stretches are compositionally biased toward acidic residues: residues Glu-124–Ser-133 and Asn-141–Glu-157. Ser-149 bears the Phosphoserine; by CK2 mark.

In terms of tissue distribution, expressed in all tissues examined.

The protein localises to the nucleus. Functionally, recognizes an AAGG motif at the MNF1-binding site. This is DNA-binding protein MNB1B (MNB1B) from Zea mays (Maize).